The sequence spans 218 residues: Ropporin-1-like protein (218 aa).

Positions 17–46 (PELTDILKQFTKAAIRTQPADVLQWSAGYF) constitute an RIIa domain.

This sequence belongs to the ropporin family. As to quaternary structure, component of the axonemal radial spoke complex 1 (RS1), at least composed of spoke head proteins RSPH1, RSPH3, RSPH9 and the cilia-specific component RSPH4A or sperm-specific component RSPH6A, spoke stalk proteins RSPH14, DNAJB13, DYDC1, ROPN1L and NME5, and the anchor protein IQUB. May interact with AKAP3. Interacts with FSCB; the interaction increases upon spermatozoa capacitation conditions. Interacts with CFAP61. Sumoylated, sumoylation decreases upon spermatozoa capacitation conditions.

It localises to the cell projection. Its subcellular location is the cilium. The protein localises to the flagellum. Functions as part of axonemal radial spoke complexes that play an important part in the motility of sperm and cilia. Important for male fertility. With ROPN1, involved in fibrous sheath integrity and sperm motility, plays a role in PKA-dependent signaling processes required for spermatozoa capacitation. The chain is Ropporin-1-like protein (ROPN1L) from Bos taurus (Bovine).